The chain runs to 91 residues: UPF0298 protein M28_Spy0318 (91 aa).

This sequence belongs to the UPF0298 family.

The protein localises to the cytoplasm. This chain is UPF0298 protein M28_Spy0318, found in Streptococcus pyogenes serotype M28 (strain MGAS6180).